A 453-amino-acid polypeptide reads, in one-letter code: Carbamoyl phosphate synthase arginine-specific small chain (453 aa).

Residues 1 to 33 constitute a mitochondrion transit peptide; that stretch reads MFSRLAARLPKASALNGVAARQVRNLSQPAITG. Residues 26–50 are disordered; that stretch reads LSQPAITGSKGRNMPAREPRTTAAA. 3 residues coordinate L-glutamine: Ser-97, Gly-280, and Gly-282. A Glutamine amidotransferase type-1 domain is found at 233-420; it reads HVALIDCGVK…MENVELFKSN (188 aa). Residue Cys-309 is the Nucleophile of the active site. Leu-310, Gln-313, Asn-351, Gly-353, and Tyr-354 together coordinate L-glutamine. Catalysis depends on residues His-393 and Glu-395.

It belongs to the CarA family. In terms of assembly, heterodimer composed of 2 chains; the small (or glutamine) chain promotes the hydrolysis of glutamine to ammonia, which is used by the large (or ammonia) chain to synthesize carbamoyl phosphate.

The protein localises to the mitochondrion matrix. It catalyses the reaction hydrogencarbonate + L-glutamine + 2 ATP + H2O = carbamoyl phosphate + L-glutamate + 2 ADP + phosphate + 2 H(+). The enzyme catalyses L-glutamine + H2O = L-glutamate + NH4(+). It participates in amino-acid biosynthesis; L-arginine biosynthesis; carbamoyl phosphate from bicarbonate: step 1/1. In terms of biological role, small subunit of the arginine-specific carbamoyl phosphate synthase (CPSase). CPSase catalyzes the formation of carbamoyl phosphate from the ammonia moiety of glutamine, carbonate, and phosphate donated by ATP, the first step of the arginine biosynthetic pathway. The small subunit (glutamine amidotransferase) binds and cleaves glutamine to supply the large subunit with the substrate ammonia. The protein is Carbamoyl phosphate synthase arginine-specific small chain (arg-2) of Neurospora crassa (strain ATCC 24698 / 74-OR23-1A / CBS 708.71 / DSM 1257 / FGSC 987).